The following is a 161-amino-acid chain: Phosphopantetheine adenylyltransferase (161 aa).

Position 8 (Ser-8) interacts with substrate. ATP contacts are provided by residues 8–9 (SF) and His-16. Substrate contacts are provided by Lys-40, Thr-72, and Arg-86. ATP contacts are provided by residues 87-89 (GLR), Glu-97, and 122-128 (HSFLSSS).

This sequence belongs to the bacterial CoaD family. As to quaternary structure, homohexamer. Mg(2+) serves as cofactor.

The protein localises to the cytoplasm. The catalysed reaction is (R)-4'-phosphopantetheine + ATP + H(+) = 3'-dephospho-CoA + diphosphate. The protein operates within cofactor biosynthesis; coenzyme A biosynthesis; CoA from (R)-pantothenate: step 4/5. In terms of biological role, reversibly transfers an adenylyl group from ATP to 4'-phosphopantetheine, yielding dephospho-CoA (dPCoA) and pyrophosphate. The protein is Phosphopantetheine adenylyltransferase of Prochlorococcus marinus (strain SARG / CCMP1375 / SS120).